A 61-amino-acid chain; its full sequence is Photosystem II reaction center protein K (61 aa).

A propeptide spanning residues 1–24 (MPNIFSLICICLNSALQPSGFFFA) is cleaved from the precursor. A helical transmembrane segment spans residues 36-56 (IVDFMPVIPVLFFLLAFVWQA).

This sequence belongs to the PsbK family. In terms of assembly, PSII is composed of 1 copy each of membrane proteins PsbA, PsbB, PsbC, PsbD, PsbE, PsbF, PsbH, PsbI, PsbJ, PsbK, PsbL, PsbM, PsbT, PsbX, PsbY, PsbZ, Psb30/Ycf12, at least 3 peripheral proteins of the oxygen-evolving complex and a large number of cofactors. It forms dimeric complexes.

It localises to the plastid. It is found in the chloroplast thylakoid membrane. Functionally, one of the components of the core complex of photosystem II (PSII). PSII is a light-driven water:plastoquinone oxidoreductase that uses light energy to abstract electrons from H(2)O, generating O(2) and a proton gradient subsequently used for ATP formation. It consists of a core antenna complex that captures photons, and an electron transfer chain that converts photonic excitation into a charge separation. This is Photosystem II reaction center protein K from Nymphaea alba (White water-lily).